A 364-amino-acid polypeptide reads, in one-letter code: MEELPQSSDFRSIVLNNTPLIDVRAPVEFAKGAFPHAVNLPLMNDEERHVVGIKYKEEGNAEAVKLGHALVSGDVKEARIKAWTDFIASHPDAMLYCFRGGQRSQIAQEWLAENGREIVRLKGGYKAFRNWLMQETEKAVEQFKPIVLGGRTGSGKTILLKKLQNAIDLEGLANHRGSSFGRDITPQPTLIDFENALAYDLIQKLDQGFEHLVFEDEGKCVGRIYLPKILVEHLSEAPLVVLETPTEKRIEITFDEYVAKAHEKYKEVYHADYLKVWTEDMHEAMKRIQKRLGGQRYKIVCEIFEDALKEQKKNSSLEGYKVWIAYLLSEYYDPMYDYQIERNASRILFRGNAQEIEAFLKEYR.

Residues 14 to 136 (VLNNTPLIDV…AFRNWLMQET (123 aa)) form the Rhodanese domain. Cysteine 97 serves as the catalytic S-selanylcysteine intermediate.

Belongs to the SelU family. As to quaternary structure, monomer.

It catalyses the reaction 5-methylaminomethyl-2-thiouridine(34) in tRNA + selenophosphate + (2E)-geranyl diphosphate + H2O + H(+) = 5-methylaminomethyl-2-selenouridine(34) in tRNA + (2E)-thiogeraniol + phosphate + diphosphate. The enzyme catalyses 5-methylaminomethyl-2-thiouridine(34) in tRNA + (2E)-geranyl diphosphate = 5-methylaminomethyl-S-(2E)-geranyl-thiouridine(34) in tRNA + diphosphate. It carries out the reaction 5-methylaminomethyl-S-(2E)-geranyl-thiouridine(34) in tRNA + selenophosphate + H(+) = 5-methylaminomethyl-2-(Se-phospho)selenouridine(34) in tRNA + (2E)-thiogeraniol. The catalysed reaction is 5-methylaminomethyl-2-(Se-phospho)selenouridine(34) in tRNA + H2O = 5-methylaminomethyl-2-selenouridine(34) in tRNA + phosphate. Functionally, involved in the post-transcriptional modification of the uridine at the wobble position (U34) of tRNA(Lys), tRNA(Glu) and tRNA(Gln). Catalyzes the conversion of 2-thiouridine (S2U-RNA) to 2-selenouridine (Se2U-RNA). Acts in a two-step process involving geranylation of 2-thiouridine (S2U) to S-geranyl-2-thiouridine (geS2U) and subsequent selenation of the latter derivative to 2-selenouridine (Se2U) in the tRNA chain. The chain is tRNA 2-selenouridine synthase from Sulfurovum sp. (strain NBC37-1).